The sequence spans 110 residues: Nucleoid-associated protein RALTA_A1934 (110 aa).

The span at 88–98 (TTQEKMGSMTS) shows a compositional bias: polar residues. Positions 88 to 110 (TTQEKMGSMTSGLPLPPGFKLPF) are disordered. The segment covering 101–110 (PLPPGFKLPF) has biased composition (pro residues).

This sequence belongs to the YbaB/EbfC family. Homodimer.

It localises to the cytoplasm. The protein localises to the nucleoid. Binds to DNA and alters its conformation. May be involved in regulation of gene expression, nucleoid organization and DNA protection. The sequence is that of Nucleoid-associated protein RALTA_A1934 from Cupriavidus taiwanensis (strain DSM 17343 / BCRC 17206 / CCUG 44338 / CIP 107171 / LMG 19424 / R1) (Ralstonia taiwanensis (strain LMG 19424)).